A 266-amino-acid polypeptide reads, in one-letter code: Ciliary microtubule inner protein 4 (266 aa).

2 stretches are compositionally biased toward polar residues: residues 1 to 15 and 24 to 38; these read MELS…LTRT and QDMN…SLDN. The disordered stretch occupies residues 1-124; the sequence is MELSHRQGTT…SPEQRTVPLS (124 aa). Residues 47–63 show a composition bias toward low complexity; it reads LSQSPLGSSLGQGYLET. The span at 81-102 shows a compositional bias: basic and acidic residues; that stretch reads HPEDLKKGASRSSSRDARETFR.

In terms of tissue distribution, only detected in testis, in the spermatids and sperm within the seminiferous tubules (at protein level).

It localises to the cytoplasmic vesicle. The protein resides in the secretory vesicle. It is found in the acrosome. The protein localises to the cell projection. Its subcellular location is the cilium. It localises to the flagellum. In terms of biological role, seems to be associated with spermiogenesis but is not essential for sperm development and male fertility. In Mus musculus (Mouse), this protein is Ciliary microtubule inner protein 4 (Cimip4).